A 51-amino-acid polypeptide reads, in one-letter code: uncharacterized protein (51 aa).

The disordered stretch occupies residues M1–S42.

It localises to the mitochondrion. This is an uncharacterized protein from Saccharomyces cerevisiae (strain ATCC 204508 / S288c) (Baker's yeast).